A 211-amino-acid polypeptide reads, in one-letter code: Glycerol-3-phosphate acyltransferase (211 aa).

5 consecutive transmembrane segments (helical) span residues 8 to 28 (YCLALLGGYLLGSIPFGLILT), 84 to 104 (LALPAGIAAVIGHLFPVWLGF), 116 to 136 (VLLATAWPVGLICCALWFAVA), 145 to 165 (AALCAFAFAPLLALAVGGMGL), and 170 to 190 (LAQSHWQAAAAFMLIAVLVFL).

It belongs to the PlsY family. Probably interacts with PlsX.

The protein resides in the cell inner membrane. The catalysed reaction is an acyl phosphate + sn-glycerol 3-phosphate = a 1-acyl-sn-glycero-3-phosphate + phosphate. The protein operates within lipid metabolism; phospholipid metabolism. Functionally, catalyzes the transfer of an acyl group from acyl-phosphate (acyl-PO(4)) to glycerol-3-phosphate (G3P) to form lysophosphatidic acid (LPA). This enzyme utilizes acyl-phosphate as fatty acyl donor, but not acyl-CoA or acyl-ACP. In Granulibacter bethesdensis (strain ATCC BAA-1260 / CGDNIH1), this protein is Glycerol-3-phosphate acyltransferase.